We begin with the raw amino-acid sequence, 204 residues long: UPF0637 protein SaurJH9_1166 (204 aa).

It belongs to the UPF0637 family.

This is UPF0637 protein SaurJH9_1166 from Staphylococcus aureus (strain JH9).